An 849-amino-acid polypeptide reads, in one-letter code: Protein translocase subunit SecA (849 aa).

ATP-binding positions include Gln-85, 103–107 (GEGKT), and Asp-493. Residues Cys-832, Cys-834, Cys-843, and His-844 each contribute to the Zn(2+) site.

This sequence belongs to the SecA family. As to quaternary structure, monomer and homodimer. Part of the essential Sec protein translocation apparatus which comprises SecA, SecYEG and auxiliary proteins SecDF. Other proteins may also be involved. Zn(2+) serves as cofactor.

It localises to the cell membrane. It is found in the cytoplasm. The catalysed reaction is ATP + H2O + cellular proteinSide 1 = ADP + phosphate + cellular proteinSide 2.. Part of the Sec protein translocase complex. Interacts with the SecYEG preprotein conducting channel. Has a central role in coupling the hydrolysis of ATP to the transfer of proteins into and across the cell membrane, serving as an ATP-driven molecular motor driving the stepwise translocation of polypeptide chains across the membrane. The chain is Protein translocase subunit SecA from Streptococcus thermophilus (strain ATCC BAA-491 / LMD-9).